The chain runs to 363 residues: GDP-fucose transporter (363 aa).

8 helical membrane passes run 30–47 (VITA…LVFL), 62–79 (FITW…LFLS), 126–148 (VSFY…YLIL), 152–171 (TSGQ…LLGV), 180–202 (LSYT…AIYT), 222–244 (LNAL…VFYF), 251–273 (TFWI…TGWQ), and 307–326 (LLWW…YTYV). The disordered stretch occupies residues 334 to 363 (KNSGASPASEAKSDKVKLLGRDGNAAEESV). Positions 344-353 (AKSDKVKLLG) are enriched in basic and acidic residues.

It belongs to the TPT transporter family. SLC35C subfamily.

It localises to the golgi apparatus membrane. Functionally, involved in GDP-fucose import from the cytoplasm into the Golgi lumen. This is GDP-fucose transporter from Caenorhabditis elegans.